Reading from the N-terminus, the 639-residue chain is E3 ubiquitin-protein ligase RNF12 (639 aa).

Disordered regions lie at residues 1 to 28, 67 to 403, and 467 to 534; these read MESA…RLDR, RLQQ…ESER, and NDTD…GGVT. A compositionally biased stretch (low complexity) spans 11-21; that stretch reads STEQSESQRQS. 2 stretches are compositionally biased toward polar residues: residues 110–138 and 147–166; these read SVRQ…NPNS and INVN…QSSE. A compositionally biased stretch (basic and acidic residues) spans 213 to 228; the sequence is RSPDQRRTRARTDRSR. The span at 244 to 253 shows a compositional bias: polar residues; it reads HSSSQTVDAS. The segment covering 269–286 has biased composition (low complexity); that stretch reads SSQMQNSSSSNETEGSSR. Over residues 290 to 302 the composition is skewed to polar residues; that stretch reads HITARQQALGTEG. 2 stretches are compositionally biased toward low complexity: residues 303–327 and 335–348; these read QSQS…SQST and SRSS…DSSS. The segment covering 349-358 has biased composition (polar residues); that stretch reads NAETTGTGQR. Basic and acidic residues predominate over residues 372–382; that stretch reads RPGDYRQRDSI. Over residues 383-399 the composition is skewed to polar residues; the sequence is ANRTRSRSQTPNNTVTY. Composition is skewed to pro residues over residues 473–482 and 493–506; these read NPTPVSPPAA and PEPP…PEPV. The RING-type; atypical zinc finger occupies 585-626; it reads CSVCITEYTEGNKLRKLPCSHEYHVHCIDRWLSENSTCPICR. The short motif at 636-639 is the PDZ-binding element; the sequence is ESIV.

The protein belongs to the RNF12 family. In terms of assembly, forms homodimers through the C-terminal region. The N-terminus interacts with the homeobox of LIM/homeobox factor lhx1/lim1, with lhx3/lim3 and lhx5/lim5, and with the N-terminus of ldb1.

The protein localises to the nucleus. The catalysed reaction is S-ubiquitinyl-[E2 ubiquitin-conjugating enzyme]-L-cysteine + [acceptor protein]-L-lysine = [E2 ubiquitin-conjugating enzyme]-L-cysteine + N(6)-ubiquitinyl-[acceptor protein]-L-lysine.. It participates in protein modification; protein ubiquitination. Its function is as follows. Acts as an E3 ubiquitin-protein ligase specific for ldb1, mediating ubiquitination and proteasome-dependent degradation of excess ldb1 in a RING-dependent manner. Does not degrade ldb1 bound to lhx1/lim1, nor lim1 itself and thus contributes to the establishment of proper ldb1-lhx1/lim1 stoichiometry and the formation of a ldb1-lhx1/lim1 complex. Interferes with Spemann organizer function and suppresses secondary axis formation induced by ldb1 and lhx1/lim1. The polypeptide is E3 ubiquitin-protein ligase RNF12 (Xenopus tropicalis (Western clawed frog)).